Consider the following 447-residue polypeptide: Trimethylamine monooxygenase (447 aa).

S13, E38, Q40, L46, W47, and H63 together coordinate FAD. Positions 71 and 73 each coordinate NADP(+). Residues N73 and V126 each coordinate FAD. The NADP(+) site is built by Y173, A205, S206, S208, and R229. Residues Q318 and T321 each contribute to the FAD site. R413 is a binding site for NADP(+).

Belongs to the FMO family. Requires FAD as cofactor.

The enzyme catalyses trimethylamine + NADPH + O2 = trimethylamine N-oxide + NADP(+) + H2O. Catalyzes the oxidation of trimethylamine (TMA) to produce trimethylamine N-oxide (TMAO). TMA is the best substrate, but the enzyme can also oxidize methimazole, indole and dimethylamine (DMA). This is Trimethylamine monooxygenase from Roseovarius nubinhibens (strain ATCC BAA-591 / DSM 15170 / ISM).